The following is a 252-amino-acid chain: Indole-3-glycerol phosphate synthase (252 aa).

Belongs to the TrpC family.

It catalyses the reaction 1-(2-carboxyphenylamino)-1-deoxy-D-ribulose 5-phosphate + H(+) = (1S,2R)-1-C-(indol-3-yl)glycerol 3-phosphate + CO2 + H2O. It functions in the pathway amino-acid biosynthesis; L-tryptophan biosynthesis; L-tryptophan from chorismate: step 4/5. The sequence is that of Indole-3-glycerol phosphate synthase from Listeria monocytogenes serotype 4a (strain HCC23).